Reading from the N-terminus, the 323-residue chain is Fructose-bisphosphate aldolase (323 aa).

Serine 50 lines the beta-D-fructose 1,6-bisphosphate pocket. Aspartate 83 (proton donor) is an active-site residue. Histidine 84 and histidine 178 together coordinate Zn(2+). Residues histidine 178, glycine 179, and lysine 182 each coordinate beta-D-fructose 1,6-bisphosphate. Histidine 210 is a Zn(2+) binding site. Residues glycine 211, serine 213, asparagine 253, aspartate 255, serine 256, arginine 259, and arginine 280 each coordinate beta-D-fructose 1,6-bisphosphate.

The protein belongs to the class II fructose-bisphosphate aldolase family. Homodimer. Zn(2+) serves as cofactor.

It carries out the reaction beta-D-fructose 1,6-bisphosphate = D-glyceraldehyde 3-phosphate + dihydroxyacetone phosphate. Its pathway is carbohydrate degradation; glycolysis; D-glyceraldehyde 3-phosphate and glycerone phosphate from D-glucose: step 4/4. Plays a key role in glycolysis by catalyzing the cleavage of fructose 1,6-bisphosphate into dihydroxyacetone phosphate and glyceraldehyde 3-phosphate. Does not cleave D-tagatose-1,6-bisphosphate. This Giardia intestinalis (strain ATCC 50803 / WB clone C6) (Giardia lamblia) protein is Fructose-bisphosphate aldolase.